Here is a 379-residue protein sequence, read N- to C-terminus: UDP-4-amino-4-deoxy-L-arabinose--oxoglutarate aminotransferase (379 aa).

N6-(pyridoxal phosphate)lysine is present on K182.

It belongs to the DegT/DnrJ/EryC1 family. ArnB subfamily. As to quaternary structure, homodimer. Pyridoxal 5'-phosphate serves as cofactor.

It catalyses the reaction UDP-4-amino-4-deoxy-beta-L-arabinose + 2-oxoglutarate = UDP-beta-L-threo-pentopyranos-4-ulose + L-glutamate. It participates in nucleotide-sugar biosynthesis; UDP-4-deoxy-4-formamido-beta-L-arabinose biosynthesis; UDP-4-deoxy-4-formamido-beta-L-arabinose from UDP-alpha-D-glucuronate: step 2/3. The protein operates within bacterial outer membrane biogenesis; lipopolysaccharide biosynthesis. Its function is as follows. Catalyzes the conversion of UDP-4-keto-arabinose (UDP-Ara4O) to UDP-4-amino-4-deoxy-L-arabinose (UDP-L-Ara4N). The modified arabinose is attached to lipid A and is required for resistance to polymyxin and cationic antimicrobial peptides. The polypeptide is UDP-4-amino-4-deoxy-L-arabinose--oxoglutarate aminotransferase (Salmonella paratyphi A (strain ATCC 9150 / SARB42)).